Consider the following 146-residue polypeptide: Aminoglycoside N(6')-acetyltransferase type 1 (146 aa).

One can recognise an N-acetyltransferase domain in the interval 1–146 (MIVICDHDNL…RVVFYRKTLG (146 aa)). Residues tryptophan 21, tyrosine 66, glutamate 79, and aspartate 115 each contribute to the substrate site. An acetyl-CoA-binding site is contributed by asparagine 120. Glutamate 136 contributes to the substrate binding site.

In terms of assembly, homodimer.

It catalyses the reaction kanamycin B + acetyl-CoA = N(6')-acetylkanamycin B + CoA + H(+). Catalyzes the transfer of an acetyl group from acetyl-CoA to the 6'-amino group of aminoglycoside molecules conferring resistance to antibiotics containing the purpurosamine ring including amikacin, tobramycin, netilmicin, isepamicin and sisomicin. The sequence is that of Aminoglycoside N(6')-acetyltransferase type 1 from Serratia marcescens.